Consider the following 133-residue polypeptide: Ribosome-binding factor A (133 aa).

Belongs to the RbfA family. Monomer. Binds 30S ribosomal subunits, but not 50S ribosomal subunits or 70S ribosomes.

It is found in the cytoplasm. One of several proteins that assist in the late maturation steps of the functional core of the 30S ribosomal subunit. Associates with free 30S ribosomal subunits (but not with 30S subunits that are part of 70S ribosomes or polysomes). Required for efficient processing of 16S rRNA. May interact with the 5'-terminal helix region of 16S rRNA. The chain is Ribosome-binding factor A from Escherichia coli O127:H6 (strain E2348/69 / EPEC).